The primary structure comprises 1654 residues: Cortactin-binding protein 2 (1654 aa).

The tract at residues methionine 1–phenylalanine 31 is disordered. The stretch at arginine 119 to lysine 276 forms a coiled coil. 3 disordered regions span residues serine 361–proline 432, glycine 455–arginine 480, and glutamine 495–asparagine 596. Low complexity predominate over residues serine 368–serine 379. Composition is skewed to polar residues over residues asparagine 384–threonine 395 and glutamine 411–glutamine 422. Position 499 is an asymmetric dimethylarginine (arginine 499). Residues aspartate 518–lysine 531 are compositionally biased toward polar residues. ANK repeat units lie at residues glycine 710–tyrosine 740, aspartate 744–alanine 773, asparagine 777–histidine 806, glycine 810–valine 839, aspartate 843–glycine 872, and glutamate 913–arginine 943. Residues glycine 1454–proline 1478 are disordered. Phosphoserine is present on serine 1523. Residues arginine 1556–lysine 1654 are disordered. The segment covering lysine 1581–lysine 1598 has biased composition (polar residues). Low complexity predominate over residues serine 1623–glutamine 1637. A compositionally biased stretch (basic and acidic residues) spans serine 1644–lysine 1654.

In terms of assembly, interacts with CTTN/cortactin SH3 domain. Interacts with STRN, STRN4/zinedin and MOB4/phocein; this interactions mediate the association with the STRIPAK core complex and may regulate dendritic spine distribution of the STRIPAK complex in hippocampal neurons. Activation of glutamate receptors weakens the interaction with STRN and STRN4.

The protein localises to the cytoplasm. Its subcellular location is the cell cortex. It localises to the cell projection. It is found in the dendritic spine. Its function is as follows. Regulates the dendritic spine distribution of CTTN/cortactin in hippocampal neurons, and thus controls dendritic spinogenesis and dendritic spine maintenance. Associates with the striatin-interacting phosphatase and kinase (STRIPAK) core complex to regulate dendritic spine distribution of the STRIPAK complex in hippocampal neurons. This Atelerix albiventris (Middle-African hedgehog) protein is Cortactin-binding protein 2 (CTTNBP2).